The sequence spans 212 residues: Riboflavin kinase (212 aa).

The interval 1–87 (MKKSNLDLLI…HEELSDALYR (87 aa)) is H-T-H motif-like. Residues 88–212 (GIIIGEVVSG…DGDRIRIKTL (125 aa)) form a riboflavin kinase region. Residue 97–102 (GIGEGA) coordinates CDP. 2 residues coordinate Mg(2+): T124 and N126. FMN contacts are provided by T180 and E188. 193-196 (VNLR) contributes to the CDP binding site.

It belongs to the archaeal riboflavin kinase family. It depends on Mg(2+) as a cofactor.

It catalyses the reaction riboflavin + CTP = CDP + FMN + H(+). It participates in cofactor biosynthesis; FMN biosynthesis; FMN from riboflavin (CTP route): step 1/1. In terms of biological role, catalyzes the CTP-dependent phosphorylation of riboflavin (vitamin B2) to form flavin mononucleotide (FMN). This is Riboflavin kinase (ribK) from Pyrococcus furiosus (strain ATCC 43587 / DSM 3638 / JCM 8422 / Vc1).